Reading from the N-terminus, the 136-residue chain is Snaclec rhodocytin subunit alpha (136 aa).

3 cysteine pairs are disulfide-bonded: cysteine 5/cysteine 16, cysteine 33/cysteine 131, and cysteine 106/cysteine 123. Residues 12–132 (YDQHCYQAFN…CEQMHAFVCK (121 aa)) enclose the C-type lectin domain.

It belongs to the snaclec family. In terms of assembly, dimer (non-covalently linked) of heterodimers of subunits alpha and beta (disulfide-linked). Expressed by the venom gland.

It is found in the secreted. Its function is as follows. Elicits platelet aggregation by the binding to the C-type lectin domain family 1 member B (CLEC1B/CLEC2). Binding leads to tyrosine phosphorylation in the cytoplasmic tail of CLEC1B, which promotes the binding of spleen tyrosine kinase (Syk), subsequent activation of PLC-gamma-2, and platelet activation and aggregation. Binding to GPIbalpha (GP1BA) and alpha-2/beta-1 (ITGA2/ITGB1) may also induce aggregation, but this is controversial. This Calloselasma rhodostoma (Malayan pit viper) protein is Snaclec rhodocytin subunit alpha.